A 150-amino-acid chain; its full sequence is D-aminoacyl-tRNA deacylase (150 aa).

Residues 138–139 (GP) carry the Gly-cisPro motif, important for rejection of L-amino acids motif.

This sequence belongs to the DTD family. In terms of assembly, homodimer.

It is found in the cytoplasm. It catalyses the reaction glycyl-tRNA(Ala) + H2O = tRNA(Ala) + glycine + H(+). It carries out the reaction a D-aminoacyl-tRNA + H2O = a tRNA + a D-alpha-amino acid + H(+). In terms of biological role, an aminoacyl-tRNA editing enzyme that deacylates mischarged D-aminoacyl-tRNAs. Also deacylates mischarged glycyl-tRNA(Ala), protecting cells against glycine mischarging by AlaRS. Acts via tRNA-based rather than protein-based catalysis; rejects L-amino acids rather than detecting D-amino acids in the active site. By recycling D-aminoacyl-tRNA to D-amino acids and free tRNA molecules, this enzyme counteracts the toxicity associated with the formation of D-aminoacyl-tRNA entities in vivo and helps enforce protein L-homochirality. The sequence is that of D-aminoacyl-tRNA deacylase from Porphyromonas gingivalis (strain ATCC 33277 / DSM 20709 / CIP 103683 / JCM 12257 / NCTC 11834 / 2561).